A 133-amino-acid chain; its full sequence is C-C motif chemokine 21b (133 aa).

Positions 1 to 23 (MAQMMTLSLLSLVLALCIPWTQG) are cleaved as a signal peptide. 3 cysteine pairs are disulfide-bonded: Cys-31/Cys-57, Cys-32/Cys-75, and Cys-103/Cys-122. A disordered region spans residues 87–133 (MRRLDQPPAPGKQSPGCRKNRGTSKSGKKGKGSKGCKRTEQTQPSRG). The C-terminal basic extension stretch occupies residues 98–133 (KQSPGCRKNRGTSKSGKKGKGSKGCKRTEQTQPSRG). The segment covering 104-122 (RKNRGTSKSGKKGKGSKGC) has biased composition (basic residues).

This sequence belongs to the intercrine beta (chemokine CC) family. As to quaternary structure, binds to CCR7 and to CXCR3. Interacts with PDPN; relocalizes PDPN to the basolateral membrane. Interacts with GPR174. In terms of tissue distribution, expressed strongly in lung, spleen, thymus, peripheral and mesentric lymph nodes. Also expressed in the testis, kidney, liver, and heart.

It is found in the secreted. In terms of biological role, inhibits hemopoiesis and stimulates chemotaxis. Chemotactic in vitro for thymocytes and activated T-cells, but not for B-cells, macrophages, or neutrophils. Potent mesangial cell chemoattractant. Shows preferential activity towards naive T-cells. May play a role in mediating homing of lymphocytes to secondary lymphoid organs. The protein is C-C motif chemokine 21b (Ccl21b) of Mus musculus (Mouse).